The chain runs to 572 residues: Oxygen-dependent choline dehydrogenase (572 aa).

9–38 (DYVIIGGGSAGSVLGARLSEDKDKNVLVLE) contributes to the FAD binding site. The active-site Proton acceptor is the histidine 477.

This sequence belongs to the GMC oxidoreductase family. FAD serves as cofactor.

The enzyme catalyses choline + A = betaine aldehyde + AH2. It carries out the reaction betaine aldehyde + NAD(+) + H2O = glycine betaine + NADH + 2 H(+). The protein operates within amine and polyamine biosynthesis; betaine biosynthesis via choline pathway; betaine aldehyde from choline (cytochrome c reductase route): step 1/1. Functionally, involved in the biosynthesis of the osmoprotectant glycine betaine. Catalyzes the oxidation of choline to betaine aldehyde and betaine aldehyde to glycine betaine at the same rate. The polypeptide is Oxygen-dependent choline dehydrogenase (Staphylococcus epidermidis (strain ATCC 12228 / FDA PCI 1200)).